We begin with the raw amino-acid sequence, 959 residues long: Glutamate receptor 3.4 (959 aa).

The first 35 residues, 1-35, serve as a signal peptide directing secretion; sequence MGFLVMIREVSMAKAIRVVLLCVSVLWVVPKECAC. Topologically, residues 36-613 are extracellular; the sequence is RSNFSRNSSS…SPWSFLKPFT (578 aa). N-linked (GlcNAc...) asparagine glycans are attached at residues Asn-38, Asn-42, Asn-108, Asn-365, Asn-378, Asn-404, Asn-443, Asn-461, and Asn-576. Residues 614–634 form a helical membrane-spanning segment; sequence IEMWAVTGGFFLFVGAMVWIL. Over 635 to 643 the chain is Cytoplasmic; that stretch reads EHRFNQEFR. The chain crosses the membrane as a helical span at residues 644 to 664; the sequence is GPPRRQLITIFWFSFSTMFFS. The Cytoplasmic segment spans residues 665–675; the sequence is HRENTVSSLGR. A helical transmembrane segment spans residues 676–696; the sequence is FVLIIWLFVVLIINSSYTASL. The Extracellular portion of the chain corresponds to 697 to 857; the sequence is TSILTIRQLT…SEDSQLSLKS (161 aa). Residues 858–878 traverse the membrane as a helical segment; sequence FWGLFLICGITCFMALTVFFW. Residues 879 to 959 are Cytoplasmic-facing; that stretch reads RVFWQYQRLL…TSQSQHGEIT (81 aa). 2 disordered regions span residues 893 to 913 and 936 to 959; these read DEER…SRAP and KSSK…GEIT. The span at 943–959 shows a compositional bias: low complexity; it reads STQSAAGTSQSQHGEIT.

The protein belongs to the glutamate-gated ion channel (TC 1.A.10.1) family. As to quaternary structure, forms a heteromeric channel with GLR3.2. Highly expressed in roots and at lower levels in leaves and siliques. Expressed in seedlings, cotyledons, roots (e.g. root hairs, epidermis and cortex cells), stems, leaves (e.g. vascular bundles and hydathodes), and siliques. Expressed in root phloem.

It localises to the cell membrane. It is found in the plastid. The protein resides in the chloroplast membrane. In terms of biological role, glutamate-gated receptor that probably acts as a non-selective cation channel, at least in hypocotyls. Can be triggered by Asn, Ser, Gly and, to a lower extent, Ala, Cys and Glu. May be involved in light-signal transduction and calcium homeostasis via the regulation of calcium influx into cells. Plays an important role in the calcium-based fast transmission of environmental stress. Acts as a negative regulator of lateral root initiation and development. May restrict primordia numbers and position along the root axis by a signaling process originating in the phloem. AtGLR3.4-mediated cytosolic calcium influx may be involved in the regulation of seed germination under salt stress by modulating sodium accumulation through the SOS pathway. The sequence is that of Glutamate receptor 3.4 from Arabidopsis thaliana (Mouse-ear cress).